Consider the following 170-residue polypeptide: Large ribosomal subunit protein uL11 (170 aa).

This sequence belongs to the universal ribosomal protein uL11 family. Part of the ribosomal stalk of the 50S ribosomal subunit. Interacts with L10 and the large rRNA to form the base of the stalk. L10 forms an elongated spine to which L12 dimers bind in a sequential fashion forming a multimeric L10(L12)X complex.

Functionally, forms part of the ribosomal stalk which helps the ribosome interact with GTP-bound translation factors. The protein is Large ribosomal subunit protein uL11 of Saccharolobus islandicus (strain Y.N.15.51 / Yellowstone #2) (Sulfolobus islandicus).